The sequence spans 726 residues: Catalase-peroxidase (726 aa).

A disordered region spans residues 1–33 (MSTTDDTHNTLSTGKCPFHQGGHDRSAGAGTAS). A cross-link (tryptophyl-tyrosyl-methioninium (Trp-Tyr) (with M-252)) is located at residues 105–226 (WHGAGTYRSI…LGATEMGLIY (122 aa)). The active-site Proton acceptor is the histidine 106. The segment at residues 226–252 (YVNPEGPDHSGEPLSAAAAIRATFGNM) is a cross-link (tryptophyl-tyrosyl-methioninium (Tyr-Met) (with W-105)). Position 267 (histidine 267) interacts with heme b.

It belongs to the peroxidase family. Peroxidase/catalase subfamily. In terms of assembly, homodimer or homotetramer. Requires heme b as cofactor. In terms of processing, formation of the three residue Trp-Tyr-Met cross-link is important for the catalase, but not the peroxidase activity of the enzyme.

It carries out the reaction H2O2 + AH2 = A + 2 H2O. The catalysed reaction is 2 H2O2 = O2 + 2 H2O. Its function is as follows. Bifunctional enzyme with both catalase and broad-spectrum peroxidase activity. In Salmonella schwarzengrund (strain CVM19633), this protein is Catalase-peroxidase.